Consider the following 75-residue polypeptide: Cytochrome c oxidase subunit 6C (75 aa).

Residues 1-13 (MAPEVLPKPRMRG) lie on the Mitochondrial matrix side of the membrane. Residues 14–54 (LLARRLRNHMAVAFVLSLGVAALYKFRVADQRKKAYADFYR) form a helical membrane-spanning segment. At 55–75 (NYDVMKDFEEMRKAGIFQSVK) the chain is on the mitochondrial intermembrane side.

The protein belongs to the cytochrome c oxidase subunit 6c family. Component of the cytochrome c oxidase (complex IV, CIV), a multisubunit enzyme composed of 14 subunits. The complex is composed of a catalytic core of 3 subunits MT-CO1, MT-CO2 and MT-CO3, encoded in the mitochondrial DNA, and 11 supernumerary subunits COX4I1 (or COX4I2), COX5A, COX5B, COX6A1 (or COX6A2), COX6B1 (or COX6B2), COX6C, COX7A2 (or COX7A1), COX7B, COX7C, COX8A and NDUFA4, which are encoded in the nuclear genome. The complex exists as a monomer or a dimer and forms supercomplexes (SCs) in the inner mitochondrial membrane with NADH-ubiquinone oxidoreductase (complex I, CI) and ubiquinol-cytochrome c oxidoreductase (cytochrome b-c1 complex, complex III, CIII), resulting in different assemblies (supercomplex SCI(1)III(2)IV(1) and megacomplex MCI(2)III(2)IV(2)).

The protein resides in the mitochondrion inner membrane. It participates in energy metabolism; oxidative phosphorylation. Its function is as follows. Component of the cytochrome c oxidase, the last enzyme in the mitochondrial electron transport chain which drives oxidative phosphorylation. The respiratory chain contains 3 multisubunit complexes succinate dehydrogenase (complex II, CII), ubiquinol-cytochrome c oxidoreductase (cytochrome b-c1 complex, complex III, CIII) and cytochrome c oxidase (complex IV, CIV), that cooperate to transfer electrons derived from NADH and succinate to molecular oxygen, creating an electrochemical gradient over the inner membrane that drives transmembrane transport and the ATP synthase. Cytochrome c oxidase is the component of the respiratory chain that catalyzes the reduction of oxygen to water. Electrons originating from reduced cytochrome c in the intermembrane space (IMS) are transferred via the dinuclear copper A center (CU(A)) of subunit 2 and heme A of subunit 1 to the active site in subunit 1, a binuclear center (BNC) formed by heme A3 and copper B (CU(B)). The BNC reduces molecular oxygen to 2 water molecules using 4 electrons from cytochrome c in the IMS and 4 protons from the mitochondrial matrix. In Homo sapiens (Human), this protein is Cytochrome c oxidase subunit 6C (COX6C).